Reading from the N-terminus, the 195-residue chain is Cysteine/O-acetylserine efflux protein (195 aa).

Residues methionine 1 to phenylalanine 9 are Periplasmic-facing. Residues tryptophan 10–threonine 32 traverse the membrane as a helical segment. Over alanine 33–methionine 46 the chain is Cytoplasmic. A helical membrane pass occupies residues serine 47–isoleucine 67. At aspartate 68–proline 69 the chain is on the periplasmic side. The chain crosses the membrane as a helical span at residues alanine 70 to isoleucine 90. At alanine 91–proline 104 the chain is on the cytoplasmic side. Residues valine 105–isoleucine 125 traverse the membrane as a helical segment. At threonine 126–tryptophan 141 the chain is on the periplasmic side. A helical membrane pass occupies residues valine 142–leucine 162. Residues alanine 163–arginine 176 are Cytoplasmic-facing. The helical transmembrane segment at glutamine 177–phenylalanine 194 threads the bilayer. A topological domain (periplasmic) is located at residue tyrosine 195.

This sequence belongs to the Rht family.

It localises to the cell inner membrane. It carries out the reaction O-acetyl-L-serine(in) = O-acetyl-L-serine(out). The enzyme catalyses L-cysteine(in) = L-cysteine(out). Exporter of O-acetylserine (OAS) and cysteine. The protein is Cysteine/O-acetylserine efflux protein (eamB) of Salmonella paratyphi A (strain ATCC 9150 / SARB42).